The sequence spans 397 residues: Galactokinase (397 aa).

A disordered region spans residues 1-27 (MGEAVGEPSASGSGSCTGRSRRGCGRR). Residues 9 to 18 (SASGSGSCTG) are compositionally biased toward low complexity. 36–39 (EHTD) contributes to the substrate binding site. ATP is bound by residues S69 and 124-130 (GAGLSSS). S130 and E161 together coordinate Mg(2+). The active-site Proton acceptor is the D173. Y225 lines the substrate pocket.

This sequence belongs to the GHMP kinase family. GalK subfamily.

It is found in the cytoplasm. It catalyses the reaction alpha-D-galactose + ATP = alpha-D-galactose 1-phosphate + ADP + H(+). It functions in the pathway carbohydrate metabolism; galactose metabolism. Functionally, catalyzes the transfer of the gamma-phosphate of ATP to D-galactose to form alpha-D-galactose-1-phosphate (Gal-1-P). The polypeptide is Galactokinase (Streptomyces lividans).